Reading from the N-terminus, the 94-residue chain is Integration host factor subunit beta (94 aa).

Belongs to the bacterial histone-like protein family. As to quaternary structure, heterodimer of an alpha and a beta chain.

Functionally, this protein is one of the two subunits of integration host factor, a specific DNA-binding protein that functions in genetic recombination as well as in transcriptional and translational control. The polypeptide is Integration host factor subunit beta (Pseudomonas paraeruginosa (strain DSM 24068 / PA7) (Pseudomonas aeruginosa (strain PA7))).